The following is a 1190-amino-acid chain: Ras-specific guanine nucleotide-releasing factor 2 (1190 aa).

Residues 22-133 form the PH 1 domain; it reads EGTKRGFLSK…WMEAIHQASY (112 aa). Residues 155–193 adopt a coiled-coil conformation; it reads ETEKIAANQLRHQLEDQDTEIERLKSEIVALNKTKERMR. The 30-residue stretch at 205–234 folds into the IQ domain; the sequence is DIKKIKKVQSFMRGWLCRRKWKTIVQDYIC. The DH domain maps to 243 to 429; sequence KRNQIVFTMV…EELSRVMHDE (187 aa). The PH 2 domain occupies 470–588; it reads PSVERGKLSK…WMSDISQCVD (119 aa). In terms of domain architecture, N-terminal Ras-GEF spans 635–755; that stretch reads KVPQIRYASV…LTSSLNSRIG (121 aa). The interval 713–744 is disordered; it reads VDGKSPRLCRKFSSPPPLAVSRTSSPVRARKL. Serine 725 and serine 726 each carry phosphoserine. Serine 736 is modified (phosphoserine; by CDK5). The tract at residues 743–751 is regulates proteasomal degradation; the sequence is KLSLTSSLN. A phosphoserine mark is found at serine 745 and serine 749. The disordered stretch occupies residues 757–826; sequence LDLTTSSSSS…QPGGQVADST (70 aa). Residues 760–776 show a composition bias toward low complexity; sequence TTSSSSSSPTTTVHSPA. A compositionally biased stretch (polar residues) spans 798–810; that stretch reads TDMSPCRSPSTTP. Phosphoserine is present on residues serine 801, serine 805, and serine 925. A Ras-GEF domain is found at 955-1187; it reads SAMELAEQIT…YELSLKIEPR (233 aa). The tract at residues 1052–1081 is responsible of the affinity for farnesylated versus geranylgeranylated Ras; the sequence is ALNRSAIYRLKKTWTKVSKQTKALMDKLQK.

Homooligomer and heterooligomer with RASGRF1. Interacts with Ras and RAC1. Interacts in a calcium-dependent manner with calmodulin. Interacts with CDK5R1 and probably EPB49. Interacts with the AMPA receptor through GRIA1. Interacts with microtubules. Post-translationally, phosphorylated by CDK5; down-regulates RASGRF2-mediated RAC1 activation. In terms of processing, ubiquitinated upon interaction with Ras. Ubiquitination leads to degradation through the 26S proteasome. Widely expressed. Detected in brain, lung, spleen, pancreas, kidney, liver, heart, mammary gland and skeletal muscle.

The protein resides in the cytoplasm. It localises to the cell membrane. The protein localises to the endoplasmic reticulum membrane. Functions as a calcium-regulated nucleotide exchange factor activating both Ras and RAC1 through the exchange of bound GDP for GTP. Preferentially activates HRAS in vivo compared to RRAS based on their different types of prenylation. Functions in synaptic plasticity by contributing to the induction of long term potentiation. This chain is Ras-specific guanine nucleotide-releasing factor 2 (Rasgrf2), found in Rattus norvegicus (Rat).